We begin with the raw amino-acid sequence, 159 residues long: MFSGIKGPNPSDLKGPELRILIVHARWNLQAIEPLVKGAVETMIEKHDVKLENIDIESVPGSWELPQGIRASIARNTYDAVIGIGVLIKGSTMHFEYISEAVVHGLMRVGLDSGVPVILGLLTVLNEEQALYRAGLNGGHNHGNDWGSAAVEMGLKALY.

5-amino-6-(D-ribitylamino)uracil-binding positions include Trp27, 62–64 (SWE), and 86–88 (VLI). Residue 91–92 (ST) coordinates (2S)-2-hydroxy-3-oxobutyl phosphate. Residue His94 is the Proton donor of the active site. 5-amino-6-(D-ribitylamino)uracil is bound at residue Leu119. Arg133 provides a ligand contact to (2S)-2-hydroxy-3-oxobutyl phosphate.

As to quaternary structure, homopentamer.

It carries out the reaction (2S)-2-hydroxy-3-oxobutyl phosphate + 5-amino-6-(D-ribitylamino)uracil = 6,7-dimethyl-8-(1-D-ribityl)lumazine + phosphate + 2 H2O + H(+). It functions in the pathway cofactor biosynthesis; riboflavin biosynthesis; riboflavin from 2-hydroxy-3-oxobutyl phosphate and 5-amino-6-(D-ribitylamino)uracil: step 1/2. Competitively inhibited by riboflavin (Ki of 17 uM). Catalyzes the formation of 6,7-dimethyl-8-ribityllumazine by condensation of 5-amino-6-(D-ribitylamino)uracil with 3,4-dihydroxy-2-butanone 4-phosphate. This is the penultimate step in the biosynthesis of riboflavin. Also binds riboflavin with an unexpected high affinity. The sequence is that of 6,7-dimethyl-8-ribityllumazine synthase (rib4) from Schizosaccharomyces pombe (strain 972 / ATCC 24843) (Fission yeast).